The primary structure comprises 132 residues: Antileukoproteinase (132 aa).

The N-terminal stretch at 1–25 is a signal peptide; the sequence is MKSSGLFPFLVLLALGTLAPWAVEG. 2 consecutive WAP domains span residues 28–76 and 82–130; these read KSFK…LDPV and TRRK…VSPV. Intrachain disulfides connect cysteine 35/cysteine 64, cysteine 43/cysteine 68, cysteine 51/cysteine 63, cysteine 57/cysteine 72, cysteine 89/cysteine 118, cysteine 96/cysteine 122, cysteine 105/cysteine 117, and cysteine 111/cysteine 126. Residues 84–132 form an elastase inhibitory domain region; that stretch reads RKPGKCPVTYGQCLMLNPPNFCEMDGQCKRDLKCCMGMCGKSCVSPVKA.

As to quaternary structure, interacts with GRN; interaction protects progranulin from proteolysis. As to expression, detected in blood plasma. Detected in bone marrow myeloid cells. Detected in airway sputum. Detected in parotid gland secretions. Detected in seminal plasma (at protein level). Detected in uterus cervix.

The protein resides in the secreted. Functionally, acid-stable proteinase inhibitor with strong affinities for trypsin, chymotrypsin, elastase, and cathepsin G. Modulates the inflammatory and immune responses after bacterial infection, and after infection by the intracellular parasite L.major. Down-regulates responses to bacterial lipopolysaccharide (LPS). Plays a role in regulating the activation of NF-kappa-B and inflammatory responses. Has antimicrobial activity against mycobacteria, but not against salmonella. Contributes to normal resistance against infection by M.tuberculosis. Required for normal resistance to infection by L.major. Required for normal wound healing, probably by preventing tissue damage by limiting protease activity. Together with ELANE, required for normal differentiation and proliferation of bone marrow myeloid cells. This Homo sapiens (Human) protein is Antileukoproteinase (SLPI).